The chain runs to 213 residues: Orotate phosphoribosyltransferase (213 aa).

5-phospho-alpha-D-ribose 1-diphosphate is bound at residue lysine 26. 34 to 35 (FF) is an orotate binding site. Residues 72–73 (YK), arginine 99, lysine 100, lysine 103, histidine 105, and 124–132 (DDVITAGTA) each bind 5-phospho-alpha-D-ribose 1-diphosphate. Orotate-binding residues include threonine 128 and arginine 156.

This sequence belongs to the purine/pyrimidine phosphoribosyltransferase family. PyrE subfamily. In terms of assembly, homodimer. Mg(2+) serves as cofactor.

The enzyme catalyses orotidine 5'-phosphate + diphosphate = orotate + 5-phospho-alpha-D-ribose 1-diphosphate. Its pathway is pyrimidine metabolism; UMP biosynthesis via de novo pathway; UMP from orotate: step 1/2. In terms of biological role, catalyzes the transfer of a ribosyl phosphate group from 5-phosphoribose 1-diphosphate to orotate, leading to the formation of orotidine monophosphate (OMP). The polypeptide is Orotate phosphoribosyltransferase (Haemophilus ducreyi (strain 35000HP / ATCC 700724)).